The sequence spans 208 residues: Thymidylate kinase (208 aa).

10-17 (GLEGAGKT) provides a ligand contact to ATP.

It belongs to the thymidylate kinase family.

It carries out the reaction dTMP + ATP = dTDP + ADP. In terms of biological role, phosphorylation of dTMP to form dTDP in both de novo and salvage pathways of dTTP synthesis. This is Thymidylate kinase from Actinobacillus pleuropneumoniae serotype 5b (strain L20).